The sequence spans 491 residues: 3-octaprenyl-4-hydroxybenzoate carboxy-lyase (491 aa).

Asn-172 lines the Mn(2+) pocket. Prenylated FMN contacts are provided by residues 175 to 177 (IYR), 189 to 191 (RWL), and 194 to 195 (RG). Glu-238 contributes to the Mn(2+) binding site. Asp-287 acts as the Proton donor in catalysis.

It belongs to the UbiD family. Homohexamer. It depends on prenylated FMN as a cofactor. Requires Mn(2+) as cofactor.

It localises to the cell membrane. It carries out the reaction a 4-hydroxy-3-(all-trans-polyprenyl)benzoate + H(+) = a 2-(all-trans-polyprenyl)phenol + CO2. Its pathway is cofactor biosynthesis; ubiquinone biosynthesis. Catalyzes the decarboxylation of 3-octaprenyl-4-hydroxy benzoate to 2-octaprenylphenol, an intermediate step in ubiquinone biosynthesis. The protein is 3-octaprenyl-4-hydroxybenzoate carboxy-lyase of Klebsiella pneumoniae subsp. pneumoniae (strain ATCC 700721 / MGH 78578).